Consider the following 278-residue polypeptide: Phosphatidylglycerol--prolipoprotein diacylglyceryl transferase (278 aa).

3 consecutive transmembrane segments (helical) span residues 21 to 41 (WYGIIIAMGILLGYFIAQASV), 54 to 74 (IIFWSAIFGFIIARIYFVIFQ), and 88 to 108 (IWQGGIAIHGGLIGGFVTGII). Position 136 (Arg-136) interacts with a 1,2-diacyl-sn-glycero-3-phospho-(1'-sn-glycerol). Transmembrane regions (helical) follow at residues 176–196 (QPTFLYESIWDVLGFVILILL), 202–222 (IGDTFCLYLIWYSIGRFFVEG), and 234–254 (IRIAQLMSIILIIIGVVIMIV).

It belongs to the Lgt family.

The protein resides in the cell membrane. It catalyses the reaction L-cysteinyl-[prolipoprotein] + a 1,2-diacyl-sn-glycero-3-phospho-(1'-sn-glycerol) = an S-1,2-diacyl-sn-glyceryl-L-cysteinyl-[prolipoprotein] + sn-glycerol 1-phosphate + H(+). It functions in the pathway protein modification; lipoprotein biosynthesis (diacylglyceryl transfer). Its function is as follows. Catalyzes the transfer of the diacylglyceryl group from phosphatidylglycerol to the sulfhydryl group of the N-terminal cysteine of a prolipoprotein, the first step in the formation of mature lipoproteins. The protein is Phosphatidylglycerol--prolipoprotein diacylglyceryl transferase of Staphylococcus saprophyticus subsp. saprophyticus (strain ATCC 15305 / DSM 20229 / NCIMB 8711 / NCTC 7292 / S-41).